Reading from the N-terminus, the 146-residue chain is Hemoglobin subunit beta (146 aa).

V1 is modified (N-acetylvaline). Residues 2 to 146 enclose the Globin domain; that stretch reads HLTAEEKSAV…VANALAHKYH (145 aa). T12 is subject to Phosphothreonine. At K59 the chain carries N6-acetyllysine. A heme b-binding site is contributed by H63. N6-acetyllysine is present on K82. A heme b-binding site is contributed by H92. Position 93 is an S-nitrosocysteine (C93). Position 144 is an N6-acetyllysine (K144).

The protein belongs to the globin family. As to quaternary structure, heterotetramer of two alpha chains and two beta chains. Red blood cells.

In terms of biological role, involved in oxygen transport from the lung to the various peripheral tissues. This Balaenoptera acutorostrata (Common minke whale) protein is Hemoglobin subunit beta (HBB).